Here is a 525-residue protein sequence, read N- to C-terminus: Phosphoenolpyruvate carboxykinase (ATP) (525 aa).

The substrate site is built by Arg-54, Tyr-190, and Lys-196. Residues Lys-196, His-215, and 231–239 each bind ATP; that span reads GLSGTGKTT. Positions 196 and 215 each coordinate Mn(2+). Asp-252 contributes to the Mn(2+) binding site. Positions 280, 316, and 441 each coordinate ATP. Arg-316 serves as a coordination point for substrate.

Belongs to the phosphoenolpyruvate carboxykinase (ATP) family. Mn(2+) serves as cofactor.

Its subcellular location is the cytoplasm. The enzyme catalyses oxaloacetate + ATP = phosphoenolpyruvate + ADP + CO2. The protein operates within carbohydrate biosynthesis; gluconeogenesis. Its function is as follows. Involved in the gluconeogenesis. Catalyzes the conversion of oxaloacetate (OAA) to phosphoenolpyruvate (PEP) through direct phosphoryl transfer between the nucleoside triphosphate and OAA. This chain is Phosphoenolpyruvate carboxykinase (ATP), found in Nitratiruptor sp. (strain SB155-2).